A 602-amino-acid polypeptide reads, in one-letter code: DNA mismatch repair protein MutL (602 aa).

This sequence belongs to the DNA mismatch repair MutL/HexB family.

In terms of biological role, this protein is involved in the repair of mismatches in DNA. It is required for dam-dependent methyl-directed DNA mismatch repair. May act as a 'molecular matchmaker', a protein that promotes the formation of a stable complex between two or more DNA-binding proteins in an ATP-dependent manner without itself being part of a final effector complex. The chain is DNA mismatch repair protein MutL from Geotalea uraniireducens (strain Rf4) (Geobacter uraniireducens).